The following is a 284-amino-acid chain: Acetyl-coenzyme A carboxylase carboxyl transferase subunit beta (284 aa).

The CoA carboxyltransferase N-terminal domain occupies 25–284 (LWVKCPETGA…LCKILTKSVQ (260 aa)).

Belongs to the AccD/PCCB family. In terms of assembly, acetyl-CoA carboxylase is a heterohexamer composed of biotin carboxyl carrier protein (AccB), biotin carboxylase (AccC) and two subunits each of ACCase subunit alpha (AccA) and ACCase subunit beta (AccD).

The protein resides in the cytoplasm. It catalyses the reaction N(6)-carboxybiotinyl-L-lysyl-[protein] + acetyl-CoA = N(6)-biotinyl-L-lysyl-[protein] + malonyl-CoA. Its pathway is lipid metabolism; malonyl-CoA biosynthesis; malonyl-CoA from acetyl-CoA: step 1/1. Its function is as follows. Component of the acetyl coenzyme A carboxylase (ACC) complex. Biotin carboxylase (BC) catalyzes the carboxylation of biotin on its carrier protein (BCCP) and then the CO(2) group is transferred by the transcarboxylase to acetyl-CoA to form malonyl-CoA. The protein is Acetyl-coenzyme A carboxylase carboxyl transferase subunit beta of Liberibacter asiaticus (strain psy62).